Reading from the N-terminus, the 242-residue chain is Probable septum site-determining protein MinC (242 aa).

Belongs to the MinC family. In terms of assembly, interacts with MinD and FtsZ.

Its function is as follows. Cell division inhibitor that blocks the formation of polar Z ring septums. Rapidly oscillates between the poles of the cell to destabilize FtsZ filaments that have formed before they mature into polar Z rings. Prevents FtsZ polymerization. The sequence is that of Probable septum site-determining protein MinC from Buchnera aphidicola subsp. Schizaphis graminum (strain Sg).